A 289-amino-acid chain; its full sequence is MATYAVGDLQGCLEPLQCLLEQVAFDPARDRLWLVGDLVNRGPQSLETLRYLYSIRDSLVCVLGNHDLHLLAVWRNVERLKKSDTLREILEAPDCEELLQWLRQQKLMHYDEARNIAMVHAGIAPQWSLKKAQKCAAEVEEALRDDNLFDPFLDGMYGNDPAKWDSDLKGVTRLRVITNYFTRMRFCTSDGKLDLKSKEGLDTAPPGYAPWFSHKERKTRDLKIIFGHWAALEGHCNEPGIFALDSGCVWGGAMTLLNVDSGVRLTCDCDAQGRTAALSPDPLPAPAKR.

Belongs to the Ap4A hydrolase family.

The catalysed reaction is P(1),P(4)-bis(5'-adenosyl) tetraphosphate + H2O = 2 ADP + 2 H(+). Hydrolyzes diadenosine 5',5'''-P1,P4-tetraphosphate to yield ADP. The polypeptide is Bis(5'-nucleosyl)-tetraphosphatase, symmetrical (Pseudomonas fluorescens (strain ATCC BAA-477 / NRRL B-23932 / Pf-5)).